A 134-amino-acid chain; its full sequence is Small ribosomal subunit protein bS6 (134 aa).

This sequence belongs to the bacterial ribosomal protein bS6 family.

In terms of biological role, binds together with bS18 to 16S ribosomal RNA. This Pelodictyon phaeoclathratiforme (strain DSM 5477 / BU-1) protein is Small ribosomal subunit protein bS6.